A 356-amino-acid chain; its full sequence is Tyrosinase P (356 aa).

Residues 1 to 19 form the signal peptide; it reads MGFYRNLVLVAASCTQALG. N81 carries an N-linked (GlcNAc...) asparagine glycan. Cu cation contacts are provided by H87 and H96. 2 N-linked (GlcNAc...) asparagine glycosylation sites follow: N148 and N193. Position 203 (H203) interacts with Cu cation. N-linked (GlcNAc...) asparagine glycosylation occurs at N226. Cu cation-binding residues include H263 and H286. An N-linked (GlcNAc...) asparagine glycan is attached at N309.

This sequence belongs to the tyrosinase family. Cu(2+) is required as a cofactor. In terms of processing, glycosylated.

It localises to the endoplasmic reticulum lumen. Its subcellular location is the golgi apparatus lumen. It catalyses the reaction aspulvinone E + O2 = (5Z)-3-(3,4-dihydroxyphenyl)-5-[(3,4-dihydroxyphenyl)methylidene]-5-oxo-2,5-dihydrofuran-3-olate. The catalysed reaction is aspulvinone E + O2 = (2Z)-2-[(3,4-dioxocyclohexa-1,5-dien-1-yl)methylidene]-4-(4-hydroxyphenyl)-5-oxo-2,5-dihydrofuran-3-olate + H2O. With respect to regulation, activity is inhibited by the presence of dithiothreitol (DTT). In terms of biological role, tyrosinase; part of the gene cluster that mediates the biosynthesis of Asp-melanin, a pigment that confers resistance against UV light and hampers phagocytosis by soil amoeba. The nonribosomal peptide synthase melA converts 4-hydroxyphenylpyruvate (4-HPPA) to aspulvinone E. The tyrosinase tyrP then performs hydroxylations of both aromatic moieties of aspulvinone E. The product of tyrP is highly unstable, and, due to the high reactivity of methides and ortho-diquinones, the polymeric Asp-melanin forms spontaneously. In Aspergillus terreus, this protein is Tyrosinase P (tyrP).